The chain runs to 102 residues: Salivary protein Salp9 (102 aa).

The N-terminal stretch at 1–21 is a signal peptide; sequence MGLTEIMLVLVSLAFVATAAA. Residues Asn26 and Asn87 are each glycosylated (N-linked (GlcNAc...) asparagine). Residues 83-102 form a disordered region; that stretch reads SGVPNDTDAKIEETEEELEA.

This sequence belongs to the salp14 family. In terms of tissue distribution, salivary gland (at protein level). Saliva (at protein level). Midgut.

The protein resides in the secreted. In terms of biological role, salivary protein that facilitates blood feeding of adult ticks on vertebrate species. Inhibits the lectin pathway of complement system activation in the host. The sequence is that of Salivary protein Salp9 from Ixodes scapularis (Black-legged tick).